A 319-amino-acid polypeptide reads, in one-letter code: 4-hydroxy-3-methylbut-2-enyl diphosphate reductase (319 aa).

C17 contacts [4Fe-4S] cluster. Positions 46 and 79 each coordinate (2E)-4-hydroxy-3-methylbut-2-enyl diphosphate. Dimethylallyl diphosphate-binding residues include H46 and H79. The isopentenyl diphosphate site is built by H46 and H79. C101 serves as a coordination point for [4Fe-4S] cluster. (2E)-4-hydroxy-3-methylbut-2-enyl diphosphate is bound at residue H129. Position 129 (H129) interacts with dimethylallyl diphosphate. Residue H129 participates in isopentenyl diphosphate binding. E131 functions as the Proton donor in the catalytic mechanism. Residue T170 participates in (2E)-4-hydroxy-3-methylbut-2-enyl diphosphate binding. Residue C200 participates in [4Fe-4S] cluster binding. S228, S229, N230, and S273 together coordinate (2E)-4-hydroxy-3-methylbut-2-enyl diphosphate. 4 residues coordinate dimethylallyl diphosphate: S228, S229, N230, and S273. Residues S228, S229, N230, and S273 each coordinate isopentenyl diphosphate.

Belongs to the IspH family. [4Fe-4S] cluster serves as cofactor.

The catalysed reaction is isopentenyl diphosphate + 2 oxidized [2Fe-2S]-[ferredoxin] + H2O = (2E)-4-hydroxy-3-methylbut-2-enyl diphosphate + 2 reduced [2Fe-2S]-[ferredoxin] + 2 H(+). It catalyses the reaction dimethylallyl diphosphate + 2 oxidized [2Fe-2S]-[ferredoxin] + H2O = (2E)-4-hydroxy-3-methylbut-2-enyl diphosphate + 2 reduced [2Fe-2S]-[ferredoxin] + 2 H(+). The protein operates within isoprenoid biosynthesis; dimethylallyl diphosphate biosynthesis; dimethylallyl diphosphate from (2E)-4-hydroxy-3-methylbutenyl diphosphate: step 1/1. It functions in the pathway isoprenoid biosynthesis; isopentenyl diphosphate biosynthesis via DXP pathway; isopentenyl diphosphate from 1-deoxy-D-xylulose 5-phosphate: step 6/6. Catalyzes the conversion of 1-hydroxy-2-methyl-2-(E)-butenyl 4-diphosphate (HMBPP) into a mixture of isopentenyl diphosphate (IPP) and dimethylallyl diphosphate (DMAPP). Acts in the terminal step of the DOXP/MEP pathway for isoprenoid precursor biosynthesis. This Cereibacter sphaeroides (strain ATCC 17025 / ATH 2.4.3) (Rhodobacter sphaeroides) protein is 4-hydroxy-3-methylbut-2-enyl diphosphate reductase.